The chain runs to 86 residues: uncharacterized protein (86 aa).

This is an uncharacterized protein from Beak and feather disease virus (BFDV).